The chain runs to 262 residues: Acyl-[acyl-carrier-protein]--UDP-N-acetylglucosamine O-acyltransferase (262 aa).

This sequence belongs to the transferase hexapeptide repeat family. LpxA subfamily. As to quaternary structure, homotrimer.

Its subcellular location is the cytoplasm. The catalysed reaction is a (3R)-hydroxyacyl-[ACP] + UDP-N-acetyl-alpha-D-glucosamine = a UDP-3-O-[(3R)-3-hydroxyacyl]-N-acetyl-alpha-D-glucosamine + holo-[ACP]. Its pathway is glycolipid biosynthesis; lipid IV(A) biosynthesis; lipid IV(A) from (3R)-3-hydroxytetradecanoyl-[acyl-carrier-protein] and UDP-N-acetyl-alpha-D-glucosamine: step 1/6. Involved in the biosynthesis of lipid A, a phosphorylated glycolipid that anchors the lipopolysaccharide to the outer membrane of the cell. The sequence is that of Acyl-[acyl-carrier-protein]--UDP-N-acetylglucosamine O-acyltransferase from Paraburkholderia phytofirmans (strain DSM 17436 / LMG 22146 / PsJN) (Burkholderia phytofirmans).